A 419-amino-acid polypeptide reads, in one-letter code: Dual specificity mitogen-activated protein kinase kinase 7 (419 aa).

Position 2 is an N-acetylalanine (A2). Residues 2-30 adopt a coiled-coil conformation; the sequence is AASSLEQKLSRLEAKLKQENREARRRIDL. The span at 18–30 shows a compositional bias: basic and acidic residues; sequence KQENREARRRIDL. Residues 18–76 are disordered; it reads KQENREARRRIDLNLDISPQRPRPTLQLPLANDGGSRSPSSESSPQHPTPPARPRHMLG. Positions 36–63 are enriched in low complexity; sequence PQRPRPTLQLPLANDGGSRSPSSESSPQ. The d domain stretch occupies residues 37–57; that stretch reads QRPRPTLQLPLANDGGSRSPS. In terms of domain architecture, Protein kinase spans 120 to 380; sequence LENLGEMGSG…YNKLLEHSFI (261 aa). ATP-binding positions include 126 to 134 and K149; that span reads MGSGTCGQV. The active-site Proton acceptor is the D243. S271 carries the post-translational modification Phosphoserine; by MAP3K. Residue T275 is modified to Phosphothreonine; by MAP3K. The segment at 377–400 is DVD domain; the sequence is HSFIKRYETLEVDVASWFKDVMAK. Position 411 is a phosphoserine (S411).

Belongs to the protein kinase superfamily. STE Ser/Thr protein kinase family. MAP kinase kinase subfamily. As to quaternary structure, interacts with isoform 1 of VRK2. Interacts (via its D domain) with its substrates MAPK8/JNK1, MAPK9/JNK2 and MAPK10/JNK3. Interacts (via its DVD domain) with MAP3Ks activators like MAP3K5/ASK1 and MAP3K1/MEKK1. Interacts with MAPK8IP1/JIP1, MAPK8IP2/JIP2 and MAPK8IP3/JIP3 scaffold proteins. Interacts with RASSF7, the interaction promotes phosphorylation. Found in a complex with SH3RF1, RAC1, MAP3K11/MLK3, MAPK8IP1/JIP1 and MAPK8/JNK1. Found in a complex with SH3RF1, RAC2, MAP3K7/TAK1, MAPK8IP1/JIP1, MAPK8/JNK1 and MAPK9/JNK2. Mg(2+) is required as a cofactor. Post-translationally, activated by phosphorylation on Ser-271 and Thr-275 by MAP kinase kinase kinases (MAP3Ks). In terms of tissue distribution, ubiquitous; with highest level of expression in skeletal muscle. Isoform 3 is found at low levels in placenta, fetal liver, and skeletal muscle.

Its subcellular location is the nucleus. The protein localises to the cytoplasm. It catalyses the reaction L-seryl-[protein] + ATP = O-phospho-L-seryl-[protein] + ADP + H(+). It carries out the reaction L-threonyl-[protein] + ATP = O-phospho-L-threonyl-[protein] + ADP + H(+). The catalysed reaction is L-tyrosyl-[protein] + ATP = O-phospho-L-tyrosyl-[protein] + ADP + H(+). With respect to regulation, activated by phosphorylation by specific MAP kinase kinase kinases such as MAP3K1/MEKK1, MAP3K3/MEKK3, MAP3K11/MLK3 and MAP3K12/DLK. Functionally, dual specificity protein kinase which acts as an essential component of the MAP kinase signal transduction pathway. Essential component of the stress-activated protein kinase/c-Jun N-terminal kinase (SAP/JNK) signaling pathway. With MAP2K4/MKK4, is the one of the only known kinase to directly activate the stress-activated protein kinase/c-Jun N-terminal kinases MAPK8/JNK1, MAPK9/JNK2 and MAPK10/JNK3. MAP2K4/MKK4 and MAP2K7/MKK7 both activate the JNKs by phosphorylation, but they differ in their preference for the phosphorylation site in the Thr-Pro-Tyr motif. MAP2K4/MKK4 shows preference for phosphorylation of the Tyr residue and MAP2K7/MKK7 for the Thr residue. The monophosphorylation of JNKs on the Thr residue is sufficient to increase JNK activity indicating that MAP2K7/MKK7 is important to trigger JNK activity, while the additional phosphorylation of the Tyr residue by MAP2K4/MKK4 ensures optimal JNK activation. Has a specific role in JNK signal transduction pathway activated by pro-inflammatory cytokines. The MKK/JNK signaling pathway is also involved in mitochondrial death signaling pathway, including the release cytochrome c, leading to apoptosis. Part of a non-canonical MAPK signaling pathway, composed of the upstream MAP3K12 kinase and downstream MAP kinases MAPK1/ERK2 and MAPK3/ERK1, that enhances the AP-1-mediated transcription of APP in response to APOE. The protein is Dual specificity mitogen-activated protein kinase kinase 7 (MAP2K7) of Homo sapiens (Human).